A 474-amino-acid chain; its full sequence is MTNIEQERWSRVKGRLRTTVGEDVYSSWFARMDLESVQQESVHLSVPTRFLKSWIQTHYSERVLSCWQAEMPEVHRIDLTVRTAMRCAAPAKEQAAPIEPRREDNRAAAHDLRVSATAPVSANHEALGGSPLDPRLTFSSFVVGRSNTLAHAAAKQVAEGRRGDPVMFNPLYIHSGVGLGKTHLLQAVTWAGNSGLERKVLYLTAEKFMYGFVAALKSQTALAFKEALRGIDVLVIDDLQFLQGKTTQAEFCHTLNALIDAGRQVVIAADRPPSDLESLDERVRSRLAGGLVVEMASLGEELRLGILKSRVTAARAHHASFEVPLPVLEYLAHSITHNGRDLEGAINRLLAHSKLNAQPVTLEMAEREVRDLIRPQEPKRIKIEDIQRVVARQYNVSRSDLLSSRRTANVVRPRQVAMYLAKTLTLRSLPEIGRRFGGRDHTTVLHAVRKIEGLVSKDAALSDEVESLKRQLQE.

A domain I, interacts with DnaA modulators region spans residues 1–73; it reads MTNIEQERWS…LSCWQAEMPE (73 aa). The segment at 73-130 is domain II; the sequence is EVHRIDLTVRTAMRCAAPAKEQAAPIEPRREDNRAAAHDLRVSATAPVSANHEALGGS. Positions 131–353 are domain III, AAA+ region; it reads PLDPRLTFSS…GAINRLLAHS (223 aa). ATP contacts are provided by Gly-178, Gly-180, Lys-181, and Thr-182. Positions 354–474 are domain IV, binds dsDNA; the sequence is KLNAQPVTLE…VESLKRQLQE (121 aa).

This sequence belongs to the DnaA family. As to quaternary structure, oligomerizes as a right-handed, spiral filament on DNA at oriC.

The protein resides in the cytoplasm. Its function is as follows. Plays an essential role in the initiation and regulation of chromosomal replication. ATP-DnaA binds to the origin of replication (oriC) to initiate formation of the DNA replication initiation complex once per cell cycle. Binds the DnaA box (a 9 base pair repeat at the origin) and separates the double-stranded (ds)DNA. Forms a right-handed helical filament on oriC DNA; dsDNA binds to the exterior of the filament while single-stranded (ss)DNA is stabiized in the filament's interior. The ATP-DnaA-oriC complex binds and stabilizes one strand of the AT-rich DNA unwinding element (DUE), permitting loading of DNA polymerase. After initiation quickly degrades to an ADP-DnaA complex that is not apt for DNA replication. Binds acidic phospholipids. This chain is Chromosomal replication initiator protein DnaA, found in Rhodopseudomonas palustris (strain BisA53).